We begin with the raw amino-acid sequence, 257 residues long: UPF0246 protein swp_3736 (257 aa).

Belongs to the UPF0246 family.

This Shewanella piezotolerans (strain WP3 / JCM 13877) protein is UPF0246 protein swp_3736.